The sequence spans 253 residues: Glutamate racemase (253 aa).

Substrate-binding positions include 7-8 and 39-40; these read DS and YG. The active-site Proton donor/acceptor is cysteine 70. Position 71 to 72 (71 to 72) interacts with substrate; the sequence is NS. The active-site Proton donor/acceptor is cysteine 179. 180–181 contacts substrate; the sequence is TH.

It belongs to the aspartate/glutamate racemases family.

It carries out the reaction L-glutamate = D-glutamate. The protein operates within cell wall biogenesis; peptidoglycan biosynthesis. In terms of biological role, provides the (R)-glutamate required for cell wall biosynthesis. The chain is Glutamate racemase from Nitratiruptor sp. (strain SB155-2).